Consider the following 31-residue polypeptide: Cytochrome b6-f complex subunit 6 (31 aa).

A helical membrane pass occupies residues 4 to 24 (VISYLSLLFISFLFALTLFIV).

This sequence belongs to the PetL family. In terms of assembly, the 4 large subunits of the cytochrome b6-f complex are cytochrome b6, subunit IV (17 kDa polypeptide, PetD), cytochrome f and the Rieske protein, while the 4 small subunits are PetG, PetL, PetM and PetN. The complex functions as a dimer.

It is found in the plastid. The protein resides in the chloroplast thylakoid membrane. Component of the cytochrome b6-f complex, which mediates electron transfer between photosystem II (PSII) and photosystem I (PSI), cyclic electron flow around PSI, and state transitions. PetL is important for photoautotrophic growth as well as for electron transfer efficiency and stability of the cytochrome b6-f complex. The polypeptide is Cytochrome b6-f complex subunit 6 (Chara vulgaris (Common stonewort)).